A 223-amino-acid polypeptide reads, in one-letter code: Large ribosomal subunit protein uL3 (223 aa).

The protein belongs to the universal ribosomal protein uL3 family. In terms of assembly, part of the 50S ribosomal subunit. Forms a cluster with proteins L14 and L19.

Its function is as follows. One of the primary rRNA binding proteins, it binds directly near the 3'-end of the 23S rRNA, where it nucleates assembly of the 50S subunit. This is Large ribosomal subunit protein uL3 from Nocardioides sp. (strain ATCC BAA-499 / JS614).